The primary structure comprises 741 residues: Polyribonucleotide nucleotidyltransferase (741 aa).

The Mg(2+) site is built by Asp-489 and Asp-495. The KH domain maps to 556–615; that stretch reads PKIDSIQIPVDKIKVVIGKGGETIDKIIAETGVTIDIDEEGLVQIFSSDQDAIDRAKTII. The 69-residue stretch at 625 to 693 folds into the S1 motif domain; sequence GEVYTVPVVR…EKGRVDASIK (69 aa). The tract at residues 695–741 is disordered; it reads LLPKPEKNEDGENGEEHRHCCCSHHKPDHHNESVEAPKKSDESETKE. Composition is skewed to basic and acidic residues over residues 698 to 713 and 723 to 741; these read KPEK…EHRH and HHNE…ETKE.

Belongs to the polyribonucleotide nucleotidyltransferase family. Requires Mg(2+) as cofactor.

It is found in the cytoplasm. It carries out the reaction RNA(n+1) + phosphate = RNA(n) + a ribonucleoside 5'-diphosphate. In terms of biological role, involved in mRNA degradation. Catalyzes the phosphorolysis of single-stranded polyribonucleotides processively in the 3'- to 5'-direction. This chain is Polyribonucleotide nucleotidyltransferase, found in Streptococcus thermophilus (strain CNRZ 1066).